A 334-amino-acid chain; its full sequence is Cell division protein ZipA (334 aa).

Over 1–2 the chain is Periplasmic; sequence ME. Residues 3 to 23 form a helical membrane-spanning segment; sequence LHIIFLILGGLLIVLLAGFSI. Topologically, residues 24–334 are cytoplasmic; sequence YSARREKSRI…DRQAYFARVS (311 aa).

Belongs to the ZipA family. In terms of assembly, interacts with FtsZ via their C-terminal domains.

The protein resides in the cell inner membrane. Its function is as follows. Essential cell division protein that stabilizes the FtsZ protofilaments by cross-linking them and that serves as a cytoplasmic membrane anchor for the Z ring. Also required for the recruitment to the septal ring of downstream cell division proteins. The polypeptide is Cell division protein ZipA (Haemophilus ducreyi (strain 35000HP / ATCC 700724)).